Reading from the N-terminus, the 56-residue chain is UPF0391 membrane protein Bd1438 (56 aa).

Transmembrane regions (helical) follow at residues 4 to 24 (AAIA…SGVA) and 33 to 53 (ILLF…LVSG).

This sequence belongs to the UPF0391 family.

The protein localises to the cell membrane. The protein is UPF0391 membrane protein Bd1438 of Bdellovibrio bacteriovorus (strain ATCC 15356 / DSM 50701 / NCIMB 9529 / HD100).